Here is a 727-residue protein sequence, read N- to C-terminus: Elongation factor 2 (727 aa).

One can recognise a tr-type G domain in the interval 19–260 (DQIRNIGICA…MVVTHLPNPV (242 aa)). GTP-binding positions include 28–35 (AHIDHGKT), 94–98 (DTPGH), and 148–151 (NKVD). H603 carries the diphthamide modification.

The protein belongs to the TRAFAC class translation factor GTPase superfamily. Classic translation factor GTPase family. EF-G/EF-2 subfamily.

It localises to the cytoplasm. Catalyzes the GTP-dependent ribosomal translocation step during translation elongation. During this step, the ribosome changes from the pre-translocational (PRE) to the post-translocational (POST) state as the newly formed A-site-bound peptidyl-tRNA and P-site-bound deacylated tRNA move to the P and E sites, respectively. Catalyzes the coordinated movement of the two tRNA molecules, the mRNA and conformational changes in the ribosome. This chain is Elongation factor 2, found in Methanococcus aeolicus (strain ATCC BAA-1280 / DSM 17508 / OCM 812 / Nankai-3).